A 247-amino-acid polypeptide reads, in one-letter code: PF03932 family protein CutC (247 aa).

This sequence belongs to the CutC family.

It is found in the cytoplasm. This Klebsiella pneumoniae subsp. pneumoniae (strain ATCC 700721 / MGH 78578) protein is PF03932 family protein CutC.